The sequence spans 259 residues: 3-deoxy-manno-octulosonate cytidylyltransferase (259 aa).

It belongs to the KdsB family.

Its subcellular location is the cytoplasm. The enzyme catalyses 3-deoxy-alpha-D-manno-oct-2-ulosonate + CTP = CMP-3-deoxy-beta-D-manno-octulosonate + diphosphate. It functions in the pathway nucleotide-sugar biosynthesis; CMP-3-deoxy-D-manno-octulosonate biosynthesis; CMP-3-deoxy-D-manno-octulosonate from 3-deoxy-D-manno-octulosonate and CTP: step 1/1. The protein operates within bacterial outer membrane biogenesis; lipopolysaccharide biosynthesis. In terms of biological role, activates KDO (a required 8-carbon sugar) for incorporation into bacterial lipopolysaccharide in Gram-negative bacteria. The chain is 3-deoxy-manno-octulosonate cytidylyltransferase from Protochlamydia amoebophila (strain UWE25).